Consider the following 293-residue polypeptide: tRNA pseudouridine synthase B (293 aa).

D38 functions as the Nucleophile in the catalytic mechanism.

It belongs to the pseudouridine synthase TruB family. Type 1 subfamily.

The enzyme catalyses uridine(55) in tRNA = pseudouridine(55) in tRNA. Functionally, responsible for synthesis of pseudouridine from uracil-55 in the psi GC loop of transfer RNAs. This Nostoc sp. (strain PCC 7120 / SAG 25.82 / UTEX 2576) protein is tRNA pseudouridine synthase B.